The primary structure comprises 302 residues: Vacuolar iron transporter (302 aa).

The Cytoplasmic segment spans residues 1–70 (MPASGAGYAG…HTNTSSDYVK (70 aa)). The helical transmembrane segment at 71-91 (AVVFGGLDGIVTIFAIVAGCV) threads the bilayer. Residues 92-99 (GADLSCSQ) lie on the Vacuolar side of the membrane. A helical transmembrane segment spans residues 100–120 (VLMVGLGNLLADAISMGFGEY). Residues 121–211 (VSAAAEKDFV…IKRGLVMFTA (91 aa)) are Cytoplasmic-facing. 6 residues coordinate Fe cation: Glu137, Glu140, Glu148, Glu151, Met185, and Glu189. Residues 212–232 (FCFFGLLPLAGFIGWVAAFGL) form a helical membrane-spanning segment. Residues 233-235 (GAE) lie on the Vacuolar side of the membrane. A helical membrane pass occupies residues 236-256 (ADMAFLMACVVSIMTLFILGF). The Cytoplasmic portion of the chain corresponds to 257–276 (SKGKFVGQNPTKSACLMAMN). The chain crosses the membrane as a helical span at residues 277 to 297 (GGCAGTVAYGVGSLLQLVVGA). Residues 298–302 (NLTAA) lie on the Vacuolar side of the membrane.

Belongs to the CCC1 family.

The protein resides in the vacuole membrane. The catalysed reaction is Fe(2+)(in) = Fe(2+)(out). Its function is as follows. Vacuolar iron transporter involved in the transfer of iron ions from the cytosol to the vacuole for intracellular iron storage. Plays an essential role in detoxification of excess iron. Important for parasite survival within macrophages and parasite virulence in vivo. In Toxoplasma gondii (strain ATCC 50861 / VEG), this protein is Vacuolar iron transporter.